The chain runs to 766 residues: Slit homolog 2 protein (766 aa).

Residues 1–30 (MSGIGWQTLSLSLALVLSILNKVAPHACPA) form the signal peptide. One can recognise an LRRNT domain in the interval 31–55 (QCSCSGSTVDCHGLALRIVPRNIPR). LRR repeat units lie at residues 56 to 77 (NTERLDLNGNNITRITKTDFAG), 80 to 101 (HLRILQLMENKISTIERGAFHD), 104 to 125 (ELERLRLNRNNLQLFPELLFLG), 128 to 149 (KLYRLDLSENQIQAIPRKAFRG), 152 to 173 (DIKNLQLDYNQISCIEDGAFRA), and 176 to 197 (DLEVLTLNNNNITRLSVASFNH). N-linked (GlcNAc...) asparagine glycosylation is present at N66. N-linked (GlcNAc...) asparagine glycosylation occurs at N186. Residues 209–259 (NNLYCDCHLAWLSDWLRQRPRVGLYTQCMGPSHLRGHNVAEVQKREFVCSD) enclose the LRRCT 1 domain. The LRRNT 2 domain occupies 268–304 (MAPSCSVLHCPIACTCSNNIVDCRGKGLTEIPTNLPE). C281 and C290 are disulfide-bonded. 5 LRR repeats span residues 305–326 (TITEIRLEQNSIRVIPPGAFSP), 329–350 (KLRRLDLSNNQISELAPDAFQG), 353–374 (SLNSLVLYGNKITELPKSLFEG), 377–398 (SLQLLLLNANKINCLRVDAFQD), and 401–422 (NLNLLSLYDNKLQTVAKGTFSA). In terms of domain architecture, LRRCT 2 spans 434–484 (NPFICDCHLKWLADYLHTNPIETSGARCTSPRRLANKRIGQIKSKKFRCSG). 4 disulfides stabilise this stretch: C438-C461, C440-C482, C502-C508, and C506-C515. In terms of domain architecture, LRRNT 3 spans 493–529 (SGDCFADLACPEKCRCEGTTVDCSNQKLNKIPDHIPQ). LRR repeat units lie at residues 530 to 551 (YTAELRLNNNEFTVLEATGIFK), 555 to 576 (QLRKINLSNNKITDIEEGAFEG), 579 to 600 (GVNEILLTSNRLENVQHKMFKG), 603 to 624 (SLKTLMLRSNRISCVGNDSFTG), and 627 to 648 (SVRLLSLYDNQITTVAPGAFGT). N-linked (GlcNAc...) asparagine glycosylation is present at N560. N-linked (GlcNAc...) asparagine glycosylation occurs at N619. The region spanning 660 to 710 (NPFNCNCHLAWLGEWLRRKRIVTGNPRCQKPYFLKEIPIQDVAIQDFTCDD) is the LRRCT 3 domain. 4 disulfide bridges follow: C664–C687, C666–C708, C723–C729, and C727–C736. An LRRNT 4 domain is found at 714-750 (DNSCSPLSRCPSECTCLDTVVRCSNKGLKVLPKGIPR).

In terms of assembly, homodimer. Binds ROBO1 and ROBO2 with high affinity. Interacts with GREM1.

Its subcellular location is the secreted. Thought to act as molecular guidance cue in cellular migration, and function appears to be mediated by interaction with roundabout homolog receptors. During neural development involved in axonal navigation at the ventral midline of the neural tube and projection of axons to different regions. SLIT1 and SLIT2 seem to be essential for midline guidance in the forebrain by acting as repulsive signal preventing inappropriate midline crossing by axons projecting from the olfactory bulb. In spinal cord development may play a role in guiding commissural axons once they reached the floor plate by modulating the response to netrin. In vitro, silences the attractive effect of NTN1 but not its growth-stimulatory effect and silencing requires the formation of a ROBO1-DCC complex. May be implicated in spinal cord midline post-crossing axon repulsion. In vitro, only commissural axons that crossed the midline responded to SLIT2. In the developing visual system appears to function as repellent for retinal ganglion axons by providing a repulsion that directs these axons along their appropriate paths prior to, and after passage through, the optic chiasm. In vitro, collapses and repels retinal ganglion cell growth cones. Seems to play a role in branching and arborization of CNS sensory axons, and in neuronal cell migration. Seems to be involved in regulating leukocyte migration. In Rattus norvegicus (Rat), this protein is Slit homolog 2 protein (Slit2).